The chain runs to 216 residues: Pyrrolidone-carboxylate peptidase (216 aa).

Active-site residues include glutamate 80, cysteine 143, and histidine 168.

The protein belongs to the peptidase C15 family. As to quaternary structure, homotetramer.

The protein resides in the cytoplasm. It carries out the reaction Release of an N-terminal pyroglutamyl group from a polypeptide, the second amino acid generally not being Pro.. Functionally, removes 5-oxoproline from various penultimate amino acid residues except L-proline. The protein is Pyrrolidone-carboxylate peptidase of Cupriavidus taiwanensis (strain DSM 17343 / BCRC 17206 / CCUG 44338 / CIP 107171 / LMG 19424 / R1) (Ralstonia taiwanensis (strain LMG 19424)).